The sequence spans 190 residues: Remorin (190 aa).

Positions 1 to 12 (MAEEQKTSKVDV) are enriched in basic and acidic residues. 2 disordered regions span residues 1-45 (MAEE…VESK) and 50-69 (VEKP…SADR). S14 is subject to Phosphoserine. Position 58 is a phosphothreonine (T58). Residues 92–147 (EKSKAENRAQKKISDVHAWENSKKAAVEAQLRKIEEKLEKKKAQYGEKMKNKVAAI) are a coiled coil.

This sequence belongs to the remorin family. May polymerize to form filamentous structures. Expressed in roots, leaves, stems, flowers and siliques, with a maximal expression in apical regions.

Its function is as follows. Exhibits a non sequence-specific DNA-binding activity. The polypeptide is Remorin (DBP) (Arabidopsis thaliana (Mouse-ear cress)).